We begin with the raw amino-acid sequence, 360 residues long: Ankyrin repeat domain-containing protein 2 (360 aa).

The may mediate interaction with PML, p53/TP53 and YBX1 stretch occupies residues 5–120; the sequence is PSWAGVGALA…GIQNLIELRK (116 aa). Serine 99 bears the Phosphoserine; by PKB/AKT2 mark. The interval 126–147 is disordered; sequence KRDALAASHEPPPEPEEITGPV. The segment covering 138 to 147 has biased composition (acidic residues); sequence PEPEEITGPV. 5 ANK repeats span residues 147 to 176, 180 to 209, 213 to 242, 246 to 275, and 279 to 308; these read VDEE…SADT, FRRT…TVDF, LDCT…DTNV, LLST…EINA, and EGDT…DMMT. Residues 330-342 are compositionally biased toward basic and acidic residues; sequence ALEHPEPGAEHNG. A disordered region spans residues 330–360; the sequence is ALEHPEPGAEHNGLEGPNDSGRETPQPVPAQ.

Interacts with ID3; both proteins cooperate in myoblast differentiation. Interacts with TTN/titin. Interacts (via ANK repeats) with TCAP; the interaction is direct. Interacts with TJP1 (via PDZ domains). Interacts with PML; the interaction is direct. Interacts with p53/TP53. Interacts with YBX1. Interacts with AKT2. Phosphorylation at Ser-99 by PKB/AKT2 in response to oxidative stress induces translocation to the nucleus and negatively regulates myoblast differentiation. In terms of tissue distribution, mostly expressed in skeletal and cardiac muscles. Found in slow fibers. Also expressed in kidney, but to a lower extent (at protein level).

It is found in the cytoplasm. The protein resides in the myofibril. It localises to the sarcomere. The protein localises to the i band. Its subcellular location is the cytosol. It is found in the nucleus. The protein resides in the PML body. Its function is as follows. Functions as a negative regulator of myocyte differentiation. May interact with both sarcoplasmic structural proteins and nuclear proteins to regulate gene expression during muscle development and in response to muscle stress. The chain is Ankyrin repeat domain-containing protein 2 (ANKRD2) from Homo sapiens (Human).